Here is a 129-residue protein sequence, read N- to C-terminus: Protein Turandot C (129 aa).

Residues 1 to 21 (MNASISLLCFALLLISPFCLG) form the signal peptide.

It belongs to the Turandot family.

It localises to the secreted. Its function is as follows. A humoral factor that may play a role in stress tolerance. This is Protein Turandot C from Drosophila sechellia (Fruit fly).